A 131-amino-acid chain; its full sequence is Ribonuclease P protein component (131 aa).

Belongs to the RnpA family. As to quaternary structure, consists of a catalytic RNA component (M1 or rnpB) and a protein subunit.

It carries out the reaction Endonucleolytic cleavage of RNA, removing 5'-extranucleotides from tRNA precursor.. Its function is as follows. RNaseP catalyzes the removal of the 5'-leader sequence from pre-tRNA to produce the mature 5'-terminus. It can also cleave other RNA substrates such as 4.5S RNA. The protein component plays an auxiliary but essential role in vivo by binding to the 5'-leader sequence and broadening the substrate specificity of the ribozyme. The chain is Ribonuclease P protein component from Synechococcus sp. (strain WH7803).